A 739-amino-acid chain; its full sequence is Transcription activator of gluconeogenesis MCYG_04674 (739 aa).

Over residues 1–33 (MSPHQTTGQESDNMAVNGENAQASSQYIQLNSE) the composition is skewed to polar residues. The segment at 1-62 (MSPHQTTGQE…PSRPKRKKAK (62 aa)) is disordered. The span at 40 to 55 (AAEKKAAAAKAKDPSR) shows a compositional bias: basic and acidic residues. Residues 65–93 (CYACQRGHLTCGDERPCQRCIKRGFQDAC) constitute a DNA-binding region (zn(2)-C6 fungal-type). Disordered stretches follow at residues 174-223 (GPEN…QFNS), 264-308 (DTPP…GDSG), 380-420 (SRQN…HKNA), 537-574 (NHNV…STTA), and 639-668 (AQNN…GQRR). 2 stretches are compositionally biased toward polar residues: residues 267-284 (PSDN…SSGT) and 397-411 (PVVS…NLNI). Low complexity predominate over residues 547–557 (GLLTGSTSRGS). Over residues 562–574 (PYSSDQFNSSTTA) the composition is skewed to polar residues. Over residues 653-664 (NSSSNGTTSTGR) the composition is skewed to low complexity.

It belongs to the ERT1/acuK family.

The protein resides in the nucleus. Functionally, transcription factor which regulates nonfermentable carbon utilization. Activator of gluconeogenetic genes. This is Transcription activator of gluconeogenesis MCYG_04674 from Arthroderma otae (strain ATCC MYA-4605 / CBS 113480) (Microsporum canis).